Consider the following 1892-residue polypeptide: Protein TIC 214 (1892 aa).

6 helical membrane-spanning segments follow: residues 18-38 (IINS…FSIG), 64-84 (FITG…HLAL), 87-107 (PHTI…WNNH), 124-144 (LSIQ…HFIL), 172-192 (VGWL…LVWI), and 221-241 (IFSI…PSPI). Disordered regions lie at residues 250 to 300 (SKTE…EGWD), 794 to 814 (REEQ…ENKR), and 1581 to 1609 (RIQE…LGPV). The span at 256–268 (VESEEEKDVEIET) shows a compositional bias: acidic residues. Positions 1581-1602 (RIQEEKEPASQGEKERGSDIEN) are enriched in basic and acidic residues.

Belongs to the TIC214 family. As to quaternary structure, part of the Tic complex.

The protein localises to the plastid. The protein resides in the chloroplast inner membrane. Functionally, involved in protein precursor import into chloroplasts. May be part of an intermediate translocation complex acting as a protein-conducting channel at the inner envelope. The chain is Protein TIC 214 from Nicotiana tomentosiformis (Tobacco).